Consider the following 111-residue polypeptide: UPF0122 protein LACR_1522 (111 aa).

It belongs to the UPF0122 family.

Functionally, might take part in the signal recognition particle (SRP) pathway. This is inferred from the conservation of its genetic proximity to ftsY/ffh. May be a regulatory protein. The sequence is that of UPF0122 protein LACR_1522 from Lactococcus lactis subsp. cremoris (strain SK11).